We begin with the raw amino-acid sequence, 311 residues long: MKVAVLGAAGGIGQALALLLKTQLPAGSKLSLYDIAPVTPGVAVDLSHIPTAVEVKGFAGEDPTAALEGADVVLISAGVARKPGMDRSDLFNINAGIVRNLVEKCAATCPKALIGIITNPVNTTVAIAAEVLKNAGVYDKNRLFGVTTLDVIRSETFVAEAKGLNVADVKVPVIGGHSGVTILPLLSQVEGVSFTDAEVAALTTRIQNAGTEVVEAKAGGGSATLSMGQAACRFGLSLVRGLQGEANVVECAYVDGGSEHAEFFAQPVVLGKNGVEEVLAYGEVSAFEANARDAMLDTLQADIQLGIDFVK.

Residues 7-13 (GAAGGIG) and D34 contribute to the NAD(+) site. Residues R81 and R87 each coordinate substrate. Residues N94 and 117 to 119 (ITN) each bind NAD(+). Substrate contacts are provided by N119 and R153. The active-site Proton acceptor is H177. M227 contacts NAD(+).

This sequence belongs to the LDH/MDH superfamily. MDH type 1 family. As to quaternary structure, homodimer.

The catalysed reaction is (S)-malate + NAD(+) = oxaloacetate + NADH + H(+). Catalyzes the reversible oxidation of malate to oxaloacetate. This Shewanella pealeana (strain ATCC 700345 / ANG-SQ1) protein is Malate dehydrogenase.